Consider the following 344-residue polypeptide: S-adenosylmethionine:tRNA ribosyltransferase-isomerase (344 aa).

It belongs to the QueA family. Monomer.

Its subcellular location is the cytoplasm. The enzyme catalyses 7-aminomethyl-7-carbaguanosine(34) in tRNA + S-adenosyl-L-methionine = epoxyqueuosine(34) in tRNA + adenine + L-methionine + 2 H(+). The protein operates within tRNA modification; tRNA-queuosine biosynthesis. Functionally, transfers and isomerizes the ribose moiety from AdoMet to the 7-aminomethyl group of 7-deazaguanine (preQ1-tRNA) to give epoxyqueuosine (oQ-tRNA). This Thiobacillus denitrificans (strain ATCC 25259 / T1) protein is S-adenosylmethionine:tRNA ribosyltransferase-isomerase.